We begin with the raw amino-acid sequence, 133 residues long: MWNEFKKFAFKGNVVDLAVGVVIGAAFGKIVSSLVKDVITPLLGMVLGGVDFTDLKLTFGKSSIMYGNFIQTIFDFLIIAAAIFMFVKVFNKLTSRKEEEEKEEEIPEPTKEEVLLGEIRDLLKQQNSSKDRA.

2 consecutive transmembrane segments (helical) span residues V14–L34 and G67–V87.

This sequence belongs to the MscL family. In terms of assembly, homopentamer.

The protein resides in the cell membrane. Functionally, channel that opens in response to stretch forces in the membrane lipid bilayer. May participate in the regulation of osmotic pressure changes within the cell. The sequence is that of Large-conductance mechanosensitive channel from Bacillus cereus (strain AH187).